We begin with the raw amino-acid sequence, 244 residues long: Protein crossbronx (244 aa).

A UBC core domain is found at 20-176 (QQEYKILAEY…VQKNIKESKE (157 aa)). The disordered stretch occupies residues 209 to 244 (AGRSKQTEPSAQQANGGHATGLSWVKEGEFKPLSIE).

This sequence belongs to the ubiquitin-conjugating enzyme family. FTS subfamily.

The polypeptide is Protein crossbronx (cbx) (Drosophila erecta (Fruit fly)).